The sequence spans 381 residues: MDFQPGELCAYYRLCRYLGIFCIDYNPTKKKFRLRRSVLCYIVHFALQAYLVGCISVMVTYWRRCFKSELTTTGNHFDRLVMVIALGILVVQNAWLIWLQAPHLRIVRQIEFYRRNHLANVRLLLPKRLLWLIIATNVVYMANFIKTCIFEWLTDASRLFVITSLGFPLRYLVTSFTMGTYFCMVHIVRLVLDWNQSQINAIIDESADLKMTSPNRLRLRVCLEMHDRLMLLCNDEISLVYGFIAWLSWMFASLDVTGVIYLTMVIQTKKSIVLKLITNVVWLSPTFMTCAASFMSNRVTIQANKTAKMLTKVPRTGTGLDRMIEKFLLKNLRQKPILTAYGFFALDKSTLFKLFTAIFTYMVILVQFKEMENSTKSINKF.

Residues 1 to 37 (MDFQPGELCAYYRLCRYLGIFCIDYNPTKKKFRLRRS) lie on the Cytoplasmic side of the membrane. A helical membrane pass occupies residues 38 to 58 (VLCYIVHFALQAYLVGCISVM). Over 59 to 79 (VTYWRRCFKSELTTTGNHFDR) the chain is Extracellular. A helical transmembrane segment spans residues 80-100 (LVMVIALGILVVQNAWLIWLQ). Topologically, residues 101–129 (APHLRIVRQIEFYRRNHLANVRLLLPKRL) are cytoplasmic. Residues 130–150 (LWLIIATNVVYMANFIKTCIF) traverse the membrane as a helical segment. The Extracellular portion of the chain corresponds to 151–171 (EWLTDASRLFVITSLGFPLRY). A helical membrane pass occupies residues 172–192 (LVTSFTMGTYFCMVHIVRLVL). Topologically, residues 193–239 (DWNQSQINAIIDESADLKMTSPNRLRLRVCLEMHDRLMLLCNDEISL) are cytoplasmic. Residues 240–260 (VYGFIAWLSWMFASLDVTGVI) traverse the membrane as a helical segment. Over 261 to 271 (YLTMVIQTKKS) the chain is Extracellular. Residues 272 to 292 (IVLKLITNVVWLSPTFMTCAA) form a helical membrane-spanning segment. The Cytoplasmic portion of the chain corresponds to 293–350 (SFMSNRVTIQANKTAKMLTKVPRTGTGLDRMIEKFLLKNLRQKPILTAYGFFALDKST). Residues 351–371 (LFKLFTAIFTYMVILVQFKEM) form a helical membrane-spanning segment. The Extracellular portion of the chain corresponds to 372 to 381 (ENSTKSINKF). A glycan (N-linked (GlcNAc...) asparagine) is linked at Asn-373.

It belongs to the insect chemoreceptor superfamily. Gustatory receptor (GR) family. Gr21a subfamily. Expressed in the adult labellar chemosensory neurons. In larvae, is expressed in neurons of the terminal external chemosensory organ, as well as in the dorsal pharyngeal sense organ.

The protein resides in the cell membrane. Its function is as follows. Gustatory receptor which mediates acceptance or avoidance behavior, depending on its substrates. Plays a role in sustaining courtship behavior in males, possibly through the reception of a stimulating arrestant pheromone. In Drosophila melanogaster (Fruit fly), this protein is Gustatory and pheromone receptor 39a, isoform C (Gr39a).